Consider the following 374-residue polypeptide: Queuine tRNA-ribosyltransferase (374 aa).

Aspartate 89 (proton acceptor) is an active-site residue. Substrate-binding positions include 89–93 (DSGGF), aspartate 143, glutamine 187, and glycine 214. An RNA binding region spans residues 245–251 (GVGKPED). The active-site Nucleophile is the aspartate 264. Residues 269–273 (TRNAR) are RNA binding; important for wobble base 34 recognition. Positions 302, 304, 307, and 333 each coordinate Zn(2+).

The protein belongs to the queuine tRNA-ribosyltransferase family. In terms of assembly, homodimer. Within each dimer, one monomer is responsible for RNA recognition and catalysis, while the other monomer binds to the replacement base PreQ1. It depends on Zn(2+) as a cofactor.

The enzyme catalyses 7-aminomethyl-7-carbaguanine + guanosine(34) in tRNA = 7-aminomethyl-7-carbaguanosine(34) in tRNA + guanine. It functions in the pathway tRNA modification; tRNA-queuosine biosynthesis. Functionally, catalyzes the base-exchange of a guanine (G) residue with the queuine precursor 7-aminomethyl-7-deazaguanine (PreQ1) at position 34 (anticodon wobble position) in tRNAs with GU(N) anticodons (tRNA-Asp, -Asn, -His and -Tyr). Catalysis occurs through a double-displacement mechanism. The nucleophile active site attacks the C1' of nucleotide 34 to detach the guanine base from the RNA, forming a covalent enzyme-RNA intermediate. The proton acceptor active site deprotonates the incoming PreQ1, allowing a nucleophilic attack on the C1' of the ribose to form the product. After dissociation, two additional enzymatic reactions on the tRNA convert PreQ1 to queuine (Q), resulting in the hypermodified nucleoside queuosine (7-(((4,5-cis-dihydroxy-2-cyclopenten-1-yl)amino)methyl)-7-deazaguanosine). This is Queuine tRNA-ribosyltransferase from Shewanella oneidensis (strain ATCC 700550 / JCM 31522 / CIP 106686 / LMG 19005 / NCIMB 14063 / MR-1).